The chain runs to 734 residues: Protein SKG6 (734 aa).

The segment at 30-68 is disordered; sequence TRRDDSDSSSSSASSTKNSKSAECTGSKQQCQLPTDSSH. A compositionally biased stretch (low complexity) spans 37–51; the sequence is SSSSSASSTKNSKSA. The span at 53-68 shows a compositional bias: polar residues; the sequence is CTGSKQQCQLPTDSSH. The chain crosses the membrane as a helical span at residues 72-96; sequence VTVGVAVAVPVGVIIIVLAVILCIV. A Phosphoserine modification is found at Ser137. A Phosphothreonine modification is found at Thr169. 3 positions are modified to phosphoserine: Ser191, Ser193, and Ser219. The residue at position 221 (Thr221) is a Phosphothreonine. Residues Ser222 and Ser251 each carry the phosphoserine modification. The segment at 239-327 is disordered; that stretch reads RFQESESFRS…LRFGKDDDNY (89 aa). Over residues 253-273 the composition is skewed to polar residues; sequence IHNNQLSRGSATEGANKQFTF. A compositionally biased stretch (low complexity) spans 280 to 299; it reads SSSVSEEAEVLNESNESASN. Basic and acidic residues predominate over residues 309–327; the sequence is SSEKTHERNLRFGKDDDNY. Ser369 bears the Phosphoserine mark. The segment at 647-671 is disordered; it reads DLTAKPSYKPAGSFRSVSATNSRNN. Polar residues predominate over residues 661–671; it reads RSVSATNSRNN. Phosphoserine is present on residues Ser672 and Ser717. The interval 707 to 734 is disordered; that stretch reads SVGGILPHSGSQDDLRKQLGSSHNYTVN. Polar residues predominate over residues 725 to 734; the sequence is LGSSHNYTVN.

This sequence belongs to the SKG6/TOS2 family. Interacts with ZDS1 and ZDS2. Phosphorylated by CDC28.

The protein resides in the membrane. Its function is as follows. May be involved in the polarity establishment process. Suppresses the lethality of KEX2-GAS1 double null mutant when overexpressed. This Saccharomyces cerevisiae (strain ATCC 204508 / S288c) (Baker's yeast) protein is Protein SKG6 (SKG6).